The sequence spans 460 residues: Adenosylhomocysteinase (460 aa).

Substrate is bound by residues threonine 83, aspartate 158, and glutamate 184. Position 185-187 (threonine 185–threonine 187) interacts with NAD(+). Substrate contacts are provided by lysine 214 and aspartate 218. NAD(+) contacts are provided by residues asparagine 219, glycine 248 to glycine 253, glutamate 271, isoleucine 327 to histidine 329, and asparagine 373.

Belongs to the adenosylhomocysteinase family. NAD(+) serves as cofactor.

The protein resides in the cytoplasm. It carries out the reaction S-adenosyl-L-homocysteine + H2O = L-homocysteine + adenosine. The protein operates within amino-acid biosynthesis; L-homocysteine biosynthesis; L-homocysteine from S-adenosyl-L-homocysteine: step 1/1. Functionally, may play a key role in the regulation of the intracellular concentration of adenosylhomocysteine. The chain is Adenosylhomocysteinase from Bdellovibrio bacteriovorus (strain ATCC 15356 / DSM 50701 / NCIMB 9529 / HD100).